The sequence spans 275 residues: MKIVVAKNIGFCFGVERAIRTVEELLDEGKKVVTDGEIVHNKQVMEQLTKKGLKVSSEMTDGEVFVVRAHGIPKDRLEELKKIFPEVVDLTCPIVSQLFKTAQRYAKERKVIVFGKEDHPEMVALRGYAPAIVTKVPFKFEEKKVVFLSQTTSSLEEYKEFVAAMIRMNEFEEAVFLNTICPVTVNREREVEELSKICDLSIVVGGKHSSNTGKLFRIASKHSKTIWIESPDELPADVVKYGTVCVFSGTSTPNSLIENVVRKLKEMEGKRDGTI.

Cysteine 12 serves as a coordination point for [4Fe-4S] cluster. (2E)-4-hydroxy-3-methylbut-2-enyl diphosphate contacts are provided by histidine 40 and histidine 70. Residues histidine 40 and histidine 70 each coordinate dimethylallyl diphosphate. Positions 40 and 70 each coordinate isopentenyl diphosphate. Cysteine 92 is a binding site for [4Fe-4S] cluster. (2E)-4-hydroxy-3-methylbut-2-enyl diphosphate is bound at residue histidine 119. Histidine 119 lines the dimethylallyl diphosphate pocket. Residue histidine 119 coordinates isopentenyl diphosphate. Glutamate 121 acts as the Proton donor in catalysis. Threonine 151 is a binding site for (2E)-4-hydroxy-3-methylbut-2-enyl diphosphate. Cysteine 181 lines the [4Fe-4S] cluster pocket. Residues serine 209, serine 210, asparagine 211, and serine 251 each coordinate (2E)-4-hydroxy-3-methylbut-2-enyl diphosphate. Residues serine 209, serine 210, asparagine 211, and serine 251 each contribute to the dimethylallyl diphosphate site. Residues serine 209, serine 210, asparagine 211, and serine 251 each coordinate isopentenyl diphosphate.

The protein belongs to the IspH family. [4Fe-4S] cluster serves as cofactor.

The catalysed reaction is isopentenyl diphosphate + 2 oxidized [2Fe-2S]-[ferredoxin] + H2O = (2E)-4-hydroxy-3-methylbut-2-enyl diphosphate + 2 reduced [2Fe-2S]-[ferredoxin] + 2 H(+). It catalyses the reaction dimethylallyl diphosphate + 2 oxidized [2Fe-2S]-[ferredoxin] + H2O = (2E)-4-hydroxy-3-methylbut-2-enyl diphosphate + 2 reduced [2Fe-2S]-[ferredoxin] + 2 H(+). It participates in isoprenoid biosynthesis; dimethylallyl diphosphate biosynthesis; dimethylallyl diphosphate from (2E)-4-hydroxy-3-methylbutenyl diphosphate: step 1/1. Its pathway is isoprenoid biosynthesis; isopentenyl diphosphate biosynthesis via DXP pathway; isopentenyl diphosphate from 1-deoxy-D-xylulose 5-phosphate: step 6/6. Its function is as follows. Catalyzes the conversion of 1-hydroxy-2-methyl-2-(E)-butenyl 4-diphosphate (HMBPP) into a mixture of isopentenyl diphosphate (IPP) and dimethylallyl diphosphate (DMAPP). Acts in the terminal step of the DOXP/MEP pathway for isoprenoid precursor biosynthesis. The polypeptide is 4-hydroxy-3-methylbut-2-enyl diphosphate reductase (Thermotoga sp. (strain RQ2)).